Consider the following 413-residue polypeptide: Porin PorA (413 aa).

A signal peptide spans methionine 1–alanine 22. Residues threonine 265–glutamate 288 are disordered.

The protein belongs to the PorA family.

It is found in the secreted. The protein localises to the cell wall. In terms of biological role, forms water-filled channels that favor the permeation of cations. In Corynebacterium resistens (strain DSM 45100 / JCM 12819 / GTC 2026 / SICGH 158), this protein is Porin PorA.